A 119-amino-acid polypeptide reads, in one-letter code: Large ribosomal subunit protein bL20 (119 aa).

Belongs to the bacterial ribosomal protein bL20 family.

Binds directly to 23S ribosomal RNA and is necessary for the in vitro assembly process of the 50S ribosomal subunit. It is not involved in the protein synthesizing functions of that subunit. In Enterococcus faecalis (strain ATCC 700802 / V583), this protein is Large ribosomal subunit protein bL20.